An 84-amino-acid chain; its full sequence is ATP synthase subunit c (84 aa).

A run of 2 helical transmembrane segments spans residues 9–29 (IIGA…GFAI) and 54–74 (IVAG…LLFI).

Belongs to the ATPase C chain family. F-type ATPases have 2 components, F(1) - the catalytic core - and F(0) - the membrane proton channel. F(1) has five subunits: alpha(3), beta(3), gamma(1), delta(1), epsilon(1). F(0) has three main subunits: a(1), b(2) and c(10-14). The alpha and beta chains form an alternating ring which encloses part of the gamma chain. F(1) is attached to F(0) by a central stalk formed by the gamma and epsilon chains, while a peripheral stalk is formed by the delta and b chains.

It localises to the cell inner membrane. Functionally, f(1)F(0) ATP synthase produces ATP from ADP in the presence of a proton or sodium gradient. F-type ATPases consist of two structural domains, F(1) containing the extramembraneous catalytic core and F(0) containing the membrane proton channel, linked together by a central stalk and a peripheral stalk. During catalysis, ATP synthesis in the catalytic domain of F(1) is coupled via a rotary mechanism of the central stalk subunits to proton translocation. In terms of biological role, key component of the F(0) channel; it plays a direct role in translocation across the membrane. A homomeric c-ring of between 10-14 subunits forms the central stalk rotor element with the F(1) delta and epsilon subunits. This chain is ATP synthase subunit c, found in Haemophilus ducreyi (strain 35000HP / ATCC 700724).